A 131-amino-acid chain; its full sequence is Small ribosomal subunit protein uS8 (131 aa).

It belongs to the universal ribosomal protein uS8 family. As to quaternary structure, part of the 30S ribosomal subunit. Contacts proteins S5 and S12.

Its function is as follows. One of the primary rRNA binding proteins, it binds directly to 16S rRNA central domain where it helps coordinate assembly of the platform of the 30S subunit. The protein is Small ribosomal subunit protein uS8 of Helicobacter pylori (strain P12).